A 152-amino-acid chain; its full sequence is Acidic phospholipase A2 S17-58 (152 aa).

Positions 1–19 (MYPAHLLVLLAVCVSLLGA) are cleaved as a signal peptide. A propeptide spanning residues 20–27 (SNIPLPSL) is cleaved from the precursor. Disulfide bonds link Cys-38–Cys-104, Cys-54–Cys-151, Cys-56–Cys-72, Cys-71–Cys-132, Cys-78–Cys-125, Cys-88–Cys-118, and Cys-111–Cys-123. Ca(2+) is bound by residues Tyr-55, Gly-57, and Gly-59. His-75 is an active-site residue. Asp-76 contributes to the Ca(2+) binding site. Asp-126 is an active-site residue.

The protein belongs to the phospholipase A2 family. Group I subfamily. D49 sub-subfamily. Requires Ca(2+) as cofactor. As to expression, expressed by the venom gland.

It localises to the secreted. It catalyses the reaction a 1,2-diacyl-sn-glycero-3-phosphocholine + H2O = a 1-acyl-sn-glycero-3-phosphocholine + a fatty acid + H(+). In terms of biological role, snake venom phospholipase A2 (PLA2) that inhibits collagen-induced platelet aggregation. PLA2 catalyzes the calcium-dependent hydrolysis of the 2-acyl groups in 3-sn-phosphoglycerides. The polypeptide is Acidic phospholipase A2 S17-58 (Austrelaps superbus (Lowland copperhead snake)).